The primary structure comprises 317 residues: Probable transcription factor At5g61620 (317 aa).

Residues 12 to 25 (CSHCGHNGHNARTC) form a CCHC-type zinc finger. A disordered region spans residues 77–111 (DPIAAVDDTGYHSDGQIHSKKGKTAHEKKKGKPWT). The span at 94-108 (HSKKGKTAHEKKKGK) shows a compositional bias: basic residues. Residues 102–158 (HEKKKGKPWTEEEHRNFLIGLNKLGKGDWRGIAKSFVSTRTPTQVASHAQKYFIRLN) enclose the HTH myb-type domain. The segment at residues 130–154 (WRGIAKSFVSTRTPTQVASHAQKYF) is a DNA-binding region (H-T-H motif). The tract at residues 173-206 (SLEDQKEKERNSQDASTKTPPKQPITGIQQPVVQ) is disordered. The segment covering 175 to 184 (EDQKEKERNS) has biased composition (basic and acidic residues). Over residues 185-206 (QDASTKTPPKQPITGIQQPVVQ) the composition is skewed to polar residues.

Its subcellular location is the nucleus. Functionally, probable transcription factor involved in somatic embryogenesis. Acts as a positive regulator of BHLH109. The sequence is that of Probable transcription factor At5g61620 from Arabidopsis thaliana (Mouse-ear cress).